The chain runs to 176 residues: Peptide methionine sulfoxide reductase MsrA (176 aa).

Residue Cys14 is part of the active site.

This sequence belongs to the MsrA Met sulfoxide reductase family.

The catalysed reaction is L-methionyl-[protein] + [thioredoxin]-disulfide + H2O = L-methionyl-(S)-S-oxide-[protein] + [thioredoxin]-dithiol. The enzyme catalyses [thioredoxin]-disulfide + L-methionine + H2O = L-methionine (S)-S-oxide + [thioredoxin]-dithiol. Its function is as follows. Has an important function as a repair enzyme for proteins that have been inactivated by oxidation. Catalyzes the reversible oxidation-reduction of methionine sulfoxide in proteins to methionine. The chain is Peptide methionine sulfoxide reductase MsrA from Halalkalibacterium halodurans (strain ATCC BAA-125 / DSM 18197 / FERM 7344 / JCM 9153 / C-125) (Bacillus halodurans).